We begin with the raw amino-acid sequence, 512 residues long: Glutathione-binding protein GsiB (512 aa).

The signal sequence occupies residues 1–26 (MARAVHRSGLVALGIATALMASCAFA).

The protein belongs to the bacterial solute-binding protein 5 family. As to quaternary structure, the complex is composed of two ATP-binding proteins (GsiA), two transmembrane proteins (GsiC and GsiD) and a solute-binding protein (GsiB).

The protein localises to the periplasm. Its function is as follows. Part of the ABC transporter complex GsiABCD involved in glutathione import. Binds glutathione. The protein is Glutathione-binding protein GsiB of Escherichia coli O157:H7.